The sequence spans 434 residues: Tol-Pal system protein TolB (434 aa).

An N-terminal signal peptide occupies residues 1 to 24 (MKFSAYLTTLFIVLFSLFIQTVQA).

Belongs to the TolB family. In terms of assembly, the Tol-Pal system is composed of five core proteins: the inner membrane proteins TolA, TolQ and TolR, the periplasmic protein TolB and the outer membrane protein Pal. They form a network linking the inner and outer membranes and the peptidoglycan layer.

It localises to the periplasm. Part of the Tol-Pal system, which plays a role in outer membrane invagination during cell division and is important for maintaining outer membrane integrity. The sequence is that of Tol-Pal system protein TolB from Histophilus somni (strain 2336) (Haemophilus somnus).